The following is a 126-amino-acid chain: Urease subunit beta (126 aa).

The protein belongs to the urease beta subunit family. As to quaternary structure, heterotrimer of UreA (gamma), UreB (beta) and UreC (alpha) subunits. Three heterotrimers associate to form the active enzyme.

It is found in the cytoplasm. It catalyses the reaction urea + 2 H2O + H(+) = hydrogencarbonate + 2 NH4(+). Its pathway is nitrogen metabolism; urea degradation; CO(2) and NH(3) from urea (urease route): step 1/1. This chain is Urease subunit beta, found in Haloquadratum walsbyi (strain DSM 16790 / HBSQ001).